The chain runs to 793 residues: Phenylalanine--tRNA ligase beta subunit (793 aa).

One can recognise a tRNA-binding domain in the interval 39 to 148; it reads AKPFTGVVVG…EDAPVGLNIR (110 aa). The region spanning 400-476 is the B5 domain; that stretch reads PKREAIELNQ…RIHGYDNIQI (77 aa). Mg(2+)-binding residues include aspartate 454, aspartate 460, glutamate 463, and glutamate 464. The FDX-ACB domain occupies 698–791; the sequence is SRFPSVRRDI…LENTYQATLR (94 aa).

It belongs to the phenylalanyl-tRNA synthetase beta subunit family. Type 1 subfamily. Tetramer of two alpha and two beta subunits. Mg(2+) is required as a cofactor.

The protein localises to the cytoplasm. It carries out the reaction tRNA(Phe) + L-phenylalanine + ATP = L-phenylalanyl-tRNA(Phe) + AMP + diphosphate + H(+). The polypeptide is Phenylalanine--tRNA ligase beta subunit (Acinetobacter baylyi (strain ATCC 33305 / BD413 / ADP1)).